Reading from the N-terminus, the 529-residue chain is Bifunctional purine biosynthesis protein PurH (529 aa).

The MGS-like domain maps to 1–148 (MQQRRPIRRA…KNHKDVAIVV (148 aa)).

Belongs to the PurH family.

It carries out the reaction (6R)-10-formyltetrahydrofolate + 5-amino-1-(5-phospho-beta-D-ribosyl)imidazole-4-carboxamide = 5-formamido-1-(5-phospho-D-ribosyl)imidazole-4-carboxamide + (6S)-5,6,7,8-tetrahydrofolate. It catalyses the reaction IMP + H2O = 5-formamido-1-(5-phospho-D-ribosyl)imidazole-4-carboxamide. It participates in purine metabolism; IMP biosynthesis via de novo pathway; 5-formamido-1-(5-phospho-D-ribosyl)imidazole-4-carboxamide from 5-amino-1-(5-phospho-D-ribosyl)imidazole-4-carboxamide (10-formyl THF route): step 1/1. The protein operates within purine metabolism; IMP biosynthesis via de novo pathway; IMP from 5-formamido-1-(5-phospho-D-ribosyl)imidazole-4-carboxamide: step 1/1. The sequence is that of Bifunctional purine biosynthesis protein PurH from Yersinia pseudotuberculosis serotype O:1b (strain IP 31758).